The following is a 214-amino-acid chain: Vascular endothelial growth factor A (214 aa).

Residues 1-26 form the signal peptide; that stretch reads MNFLLSWVHWTLALLLYLHHAKWSQA. Cystine bridges form between cysteine 51-cysteine 93, cysteine 82-cysteine 127, and cysteine 86-cysteine 129. Residue asparagine 100 is glycosylated (N-linked (GlcNAc...) asparagine). Residues 131–142 show a composition bias toward basic and acidic residues; that stretch reads PKKDRTKPEKKS. The disordered stretch occupies residues 131–159; sequence PKKDRTKPEKKSVRGKGKGQKRKRKKSRF. Residues 143 to 159 show a composition bias toward basic residues; that stretch reads VRGKGKGQKRKRKKSRF.

It belongs to the PDGF/VEGF growth factor family. In terms of assembly, homodimer; disulfide-linked. Also found as heterodimer with PGF. Interacts with NRP1. Interacts with isoform 2 of BSG. Interacts with CD82; this interaction inhibits VEGFA-mediated signaling pathway. Expressed in the pituitary, in brain, in particularly in supraoptic and paraventricular nuclei and the choroid plexus. Also found abundantly in the corpus luteum of the ovary and in kidney glomeruli. Expressed in the ductal epithelial cells of post-pubertal mammary glands. Expressed in the ductal and alveolar epithelial cells throughout the whole period of gestational evolution, lactation and involution.

The protein resides in the secreted. Functionally, growth factor active in angiogenesis, vasculogenesis and endothelial cell growth. Induces endothelial cell proliferation, promotes cell migration, inhibits apoptosis and induces permeabilization of blood vessels. Binds to the FLT1/VEGFR1 and KDR/VEGFR2 receptors, heparan sulfate and heparin. May play a role in increasing vascular permeability during lactation, when increased transport of molecules from the blood is required for efficient milk protein synthesis. Binding to NRP1 receptor initiates a signaling pathway needed for motor neuron axon guidance and cell body migration, including for the caudal migration of facial motor neurons from rhombomere 4 to rhombomere 6 during embryonic development. Also binds the DEAR/FBXW7-AS1 receptor. The chain is Vascular endothelial growth factor A (Vegfa) from Rattus norvegicus (Rat).